The following is a 322-amino-acid chain: Quinolinate synthase (322 aa).

Iminosuccinate contacts are provided by histidine 38 and serine 55. [4Fe-4S] cluster is bound at residue cysteine 100. Iminosuccinate contacts are provided by residues 126-128 and serine 143; that span reads YIN. Cysteine 186 contributes to the [4Fe-4S] cluster binding site. Residues 212 to 214 and threonine 229 each bind iminosuccinate; that span reads HPE. Cysteine 279 provides a ligand contact to [4Fe-4S] cluster.

The protein belongs to the quinolinate synthase family. Type 2 subfamily. Requires [4Fe-4S] cluster as cofactor.

The protein resides in the cytoplasm. The enzyme catalyses iminosuccinate + dihydroxyacetone phosphate = quinolinate + phosphate + 2 H2O + H(+). It participates in cofactor biosynthesis; NAD(+) biosynthesis; quinolinate from iminoaspartate: step 1/1. Functionally, catalyzes the condensation of iminoaspartate with dihydroxyacetone phosphate to form quinolinate. The sequence is that of Quinolinate synthase from Cyanothece sp. (strain PCC 7425 / ATCC 29141).